The sequence spans 332 residues: NADH-quinone oxidoreductase subunit H (332 aa).

9 consecutive transmembrane segments (helical) span residues 16–36 (VFFG…TYAI), 87–107 (YVLA…ALPF), 116–136 (IGVG…GVVT), 164–184 (LVMS…VDIV), 190–210 (VWFI…AVAE), 231–251 (VEYS…YLFA), 253–273 (AALI…LGWI), 277–297 (VWFA…RATF), and 312–332 (VLLP…SLFF).

The protein belongs to the complex I subunit 1 family. As to quaternary structure, NDH-1 is composed of 14 different subunits. Subunits NuoA, H, J, K, L, M, N constitute the membrane sector of the complex.

Its subcellular location is the cell membrane. The catalysed reaction is a quinone + NADH + 5 H(+)(in) = a quinol + NAD(+) + 4 H(+)(out). Functionally, NDH-1 shuttles electrons from NADH, via FMN and iron-sulfur (Fe-S) centers, to quinones in the respiratory chain. The immediate electron acceptor for the enzyme in this species is believed to be ubiquinone. Couples the redox reaction to proton translocation (for every two electrons transferred, four hydrogen ions are translocated across the cytoplasmic membrane), and thus conserves the redox energy in a proton gradient. This subunit may bind ubiquinone. This is NADH-quinone oxidoreductase subunit H from Geobacillus thermodenitrificans (strain NG80-2).